The chain runs to 383 residues: MSLVDLGKKLLEAARAGQDDEVRILMANGAPFTTDWLGTSPLHLAAQYGHYSTTEVLLRAGVSRDARTKVDRTPLHMAASEGHASIVEVLLKHGADVNAKDMLKMTALHWATEHNHQEVVELLIKYGADVHTQSKFCKTAFDISIDNGNEDLAEILQIAMQNQINTNPESPDTVTIHAATPQFIIGPGGVVNLTDETGVSAVQFGNSSTSVLATLAALAEASAPLSNSSETPVVATEEVVTAESVDGAIQQVVSSGGQQVITIVTDGIQLGNLHSIPTSGIGQPIIVTMPDGQQVLTVPATDIAEETVISEEPPAKRQCIEIIENRVESAEIEEREALQKQLDEANREAQKYRQQLLKKEQEAEAYRQKLEAMTRLQTNKEAV.

Position 2 is an N-acetylserine (serine 2). ANK repeat units lie at residues 5–34 (DLGKKLLEAARAGQDDEVRILMANGAPFTT) and 37–66 (LGTSPLHLAAQYGHYSTTEVLLRAGVSRDA). The residue at position 69 (lysine 69) is an N6-acetyllysine. ANK repeat units lie at residues 70 to 99 (VDRTPLHMAASEGHASIVEVLLKHGADVNA), 103 to 132 (LKMTALHWATEHNHQEVVELLIKYGADVHT), and 136 to 166 (FCKTAFDISIDNGNEDLAEILQIAMQNQINT). N6-acetyllysine occurs at positions 340 and 369.

As to quaternary structure, heterotetramer of two alpha and two beta subunits. Interacts with HCFC1, causing repression of transcriptional activity. In terms of processing, acetylated by EP300/p300. Deacetylated by SIRT7, promoting heterotetramerization and activity.

Its subcellular location is the nucleus. In terms of biological role, transcription factor capable of interacting with purine rich repeats (GA repeats). Acts as a master regulator of nuclear-encoded mitochondrial genes. In Bos taurus (Bovine), this protein is GA-binding protein subunit beta-1 (GABPB1).